We begin with the raw amino-acid sequence, 422 residues long: Oxysterol-binding protein 7 (422 aa).

Residues 283-313 form a disordered region; that stretch reads EAAPASSASKKEKKKEKKKAKHSKHTCSPSD. Basic residues predominate over residues 293–307; it reads KEKKKEKKKAKHSKH. A coiled-coil region spans residues 354-384; it reads MQAADQIKKEIEDEQRKRLQITKEEEKKERA. Positions 402–422 are disordered; the sequence is TLAPVSNSTSSTASDAASGSN. The segment covering 407 to 422 has biased composition (low complexity); sequence SNSTSSTASDAASGSN.

It belongs to the OSBP family.

The polypeptide is Oxysterol-binding protein 7 (osbG) (Dictyostelium discoideum (Social amoeba)).